The chain runs to 740 residues: Vertnin (740 aa).

Disordered regions lie at residues 485–506 (EAGEEETGKAGSGAPLTSRGLI), 560–616 (PGMQ…DQNV), and 653–673 (TQSQPHSGSLPSQTLAEAPGG). The span at 578–604 (QKPEGRQKPEEQQKPEGRQKPEGRQKP) shows a compositional bias: basic and acidic residues. Residues 653–667 (TQSQPHSGSLPSQTL) are compositionally biased toward polar residues.

It belongs to the vertnin family.

It is found in the nucleus. Its function is as follows. Acts as a transcription factor that regulates development of thoracic vertebrae. This Mus musculus (Mouse) protein is Vertnin (Vrtn).